The chain runs to 122 residues: UPF0145 protein BceJ2315_57450 (122 aa).

This sequence belongs to the UPF0145 family.

This is UPF0145 protein BceJ2315_57450 from Burkholderia cenocepacia (strain ATCC BAA-245 / DSM 16553 / LMG 16656 / NCTC 13227 / J2315 / CF5610) (Burkholderia cepacia (strain J2315)).